We begin with the raw amino-acid sequence, 116 residues long: Small ribosomal subunit protein uS17 (116 aa).

This sequence belongs to the universal ribosomal protein uS17 family. In terms of assembly, part of the 30S ribosomal subunit.

In terms of biological role, one of the primary rRNA binding proteins, it binds specifically to the 5'-end of 16S ribosomal RNA. The polypeptide is Small ribosomal subunit protein uS17 (Pyrococcus horikoshii (strain ATCC 700860 / DSM 12428 / JCM 9974 / NBRC 100139 / OT-3)).